The chain runs to 506 residues: Gamma-aminobutyric acid receptor subunit epsilon (506 aa).

An N-terminal signal peptide occupies residues 1–22 (MLSKVLPVLLGILLILQSRVEG). The interval 23–66 (PQTESKNEASSRDVVYGPQPQPLENQLLSEETKSTETETGSRVG) is disordered. The Extracellular portion of the chain corresponds to 23-280 (PQTESKNEAS…FNVSRRFGYV (258 aa)). N-linked (GlcNAc...) asparagine glycosylation is present at N134. C195 and C209 are joined by a disulfide. Residue N252 is glycosylated (N-linked (GlcNAc...) asparagine). A helical transmembrane segment spans residues 281–301 (AFQNYVPSSVTTMLSWVSFWI). Topologically, residues 302 to 307 (KTESAP) are cytoplasmic. A helical transmembrane segment spans residues 308–327 (ARTSLGITSVLTMTTLGTFS). Over 328–343 (RKNFPRVSYITALDFY) the chain is Extracellular. Residues 344–364 (IAICFVFCFCALLEFAVLNFL) traverse the membrane as a helical segment. Over 365–485 (IYNQTKAHAS…HVYRLDNYSR (121 aa)) the chain is Cytoplasmic. The tract at residues 413–438 (EGSDGEERPSCSAQQPPSPGSPEGPR) is disordered. The chain crosses the membrane as a helical span at residues 486–506 (VVFPVTFFFFNVLYWLVCLNL).

Belongs to the ligand-gated ion channel (TC 1.A.9) family. Gamma-aminobutyric acid receptor (TC 1.A.9.5) subfamily. GABRE sub-subfamily. As to quaternary structure, heteropentamer, formed by a combination of alpha (GABRA1-6), beta (GABRB1-3), gamma (GABRG1-3), delta (GABRD), epsilon (GABRE), rho (GABRR1-3), pi (GABRP) and theta (GABRQ) chains, each subunit exhibiting distinct physiological and pharmacological properties. Expressed in many tissues. Highest levels of expression in adult heart and placenta.

The protein localises to the cell membrane. Its subcellular location is the postsynaptic cell membrane. The catalysed reaction is chloride(in) = chloride(out). Its activity is regulated as follows. Potentiated by pentobarbital, loreclezole, and lanthanum and inhibited by zinc and furosemide. Introduction of the epsilon subunit to the receptor complex resulted in diminished modulatory effects by etomidate, propofol, pregnanolone and flurazepam. Its function is as follows. Epsilon subunit of the heteropentameric ligand-gated chloride channel gated by gamma-aminobutyric acid (GABA), a major inhibitory neurotransmitter in the brain. GABA-gated chloride channels, also named GABA(A) receptors (GABAAR), consist of five subunits arranged around a central pore and contain GABA active binding site(s) located at the alpha and beta subunit interfaces. When activated by GABA, GABAARs selectively allow the flow of chloride anions across the cell membrane down their electrochemical gradient. GABAARs containing epsilon subunits also permit spontaneous chloride channel activity while preserving the structural information required for GABA-gated openings. GABARs containing epsilon subunit may regulate cardiac function. This Homo sapiens (Human) protein is Gamma-aminobutyric acid receptor subunit epsilon.